A 145-amino-acid chain; its full sequence is Plastocyanin, chloroplastic (145 aa).

The N-terminal 48 residues, 1–48 (MASLMRKAAVAPAKATRTTVKASASLQRVAQAAGVAVAGFSLALSANA), are a transit peptide targeting the chloroplast. Positions 49–145 (ANVKLGADSG…AGMVGKVIVQ (97 aa)) constitute a Plastocyanin-like domain. The Cu cation site is built by His-85, Cys-130, His-133, and Met-138.

Belongs to the plastocyanin family. Requires Cu(2+) as cofactor.

Its subcellular location is the plastid. The protein resides in the chloroplast thylakoid membrane. Participates in electron transfer between P700 and the cytochrome b6-f complex in photosystem I. In Tetradesmus obliquus (Green alga), this protein is Plastocyanin, chloroplastic (PETE).